A 432-amino-acid chain; its full sequence is Enolase (432 aa).

Q163 is a (2R)-2-phosphoglycerate binding site. The Proton donor role is filled by E205. 3 residues coordinate Mg(2+): D242, E285, and D312. (2R)-2-phosphoglycerate-binding residues include K337, R366, S367, and K388. The active-site Proton acceptor is K337.

The protein belongs to the enolase family. Mg(2+) is required as a cofactor.

The protein resides in the cytoplasm. The protein localises to the secreted. It localises to the cell surface. It catalyses the reaction (2R)-2-phosphoglycerate = phosphoenolpyruvate + H2O. Its pathway is carbohydrate degradation; glycolysis; pyruvate from D-glyceraldehyde 3-phosphate: step 4/5. Its function is as follows. Catalyzes the reversible conversion of 2-phosphoglycerate (2-PG) into phosphoenolpyruvate (PEP). It is essential for the degradation of carbohydrates via glycolysis. The sequence is that of Enolase from Bifidobacterium longum subsp. infantis (strain ATCC 15697 / DSM 20088 / JCM 1222 / NCTC 11817 / S12).